The sequence spans 68 residues: Protein SrnB (68 aa).

The chain crosses the membrane as a helical span at residues 23 to 42; sequence YALIGLLAVCATVLCFSLIF.

The protein belongs to the Hok/Gef family.

It localises to the cell inner membrane. Toxic component of a type I toxin-antitoxin (TA) system. Its normal function is believed to be effective plasmid stabilization through postsegregational killing of cells that have lost the F plasmid. Promotes degradation of stable RNA in E.coli. This is Protein SrnB (srnB) from Escherichia coli (strain K12).